The following is a 58-amino-acid chain: Keratin-associated protein 19-6 (58 aa).

It belongs to the KRTAP type 19 family. In terms of assembly, interacts with hair keratins.

Functionally, in the hair cortex, hair keratin intermediate filaments are embedded in an interfilamentous matrix, consisting of hair keratin-associated proteins (KRTAP), which are essential for the formation of a rigid and resistant hair shaft through their extensive disulfide bond cross-linking with abundant cysteine residues of hair keratins. The matrix proteins include the high-sulfur and high-glycine-tyrosine keratins. This Homo sapiens (Human) protein is Keratin-associated protein 19-6 (KRTAP19-6).